The following is a 273-amino-acid chain: 4-hydroxy-tetrahydrodipicolinate reductase (273 aa).

Residues 11 to 16 (GAGGRM) and E36 contribute to the NAD(+) site. Position 37 (R37) interacts with NADP(+). Residues 100 to 102 (GTT) and 124 to 127 (AANY) contribute to the NAD(+) site. H157 functions as the Proton donor/acceptor in the catalytic mechanism. H158 provides a ligand contact to (S)-2,3,4,5-tetrahydrodipicolinate. K161 (proton donor) is an active-site residue. 167 to 168 (GT) is a (S)-2,3,4,5-tetrahydrodipicolinate binding site.

This sequence belongs to the DapB family.

Its subcellular location is the cytoplasm. It catalyses the reaction (S)-2,3,4,5-tetrahydrodipicolinate + NAD(+) + H2O = (2S,4S)-4-hydroxy-2,3,4,5-tetrahydrodipicolinate + NADH + H(+). The enzyme catalyses (S)-2,3,4,5-tetrahydrodipicolinate + NADP(+) + H2O = (2S,4S)-4-hydroxy-2,3,4,5-tetrahydrodipicolinate + NADPH + H(+). It participates in amino-acid biosynthesis; L-lysine biosynthesis via DAP pathway; (S)-tetrahydrodipicolinate from L-aspartate: step 4/4. In terms of biological role, catalyzes the conversion of 4-hydroxy-tetrahydrodipicolinate (HTPA) to tetrahydrodipicolinate. This Acinetobacter baylyi (strain ATCC 33305 / BD413 / ADP1) protein is 4-hydroxy-tetrahydrodipicolinate reductase.